Here is a 559-residue protein sequence, read N- to C-terminus: Glucose-6-phosphate isomerase 4 (559 aa).

The Proton donor role is filled by glutamate 356. Active-site residues include histidine 387 and lysine 513.

It belongs to the GPI family.

The protein resides in the cytoplasm. The catalysed reaction is alpha-D-glucose 6-phosphate = beta-D-fructose 6-phosphate. The protein operates within carbohydrate biosynthesis; gluconeogenesis. Its pathway is carbohydrate degradation; glycolysis; D-glyceraldehyde 3-phosphate and glycerone phosphate from D-glucose: step 2/4. Its function is as follows. Catalyzes the reversible isomerization of glucose-6-phosphate to fructose-6-phosphate. This Rhodococcus jostii (strain RHA1) protein is Glucose-6-phosphate isomerase 4.